The sequence spans 203 residues: Probable nicotinate-nucleotide adenylyltransferase (203 aa).

It belongs to the NadD family.

It carries out the reaction nicotinate beta-D-ribonucleotide + ATP + H(+) = deamido-NAD(+) + diphosphate. It functions in the pathway cofactor biosynthesis; NAD(+) biosynthesis; deamido-NAD(+) from nicotinate D-ribonucleotide: step 1/1. Catalyzes the reversible adenylation of nicotinate mononucleotide (NaMN) to nicotinic acid adenine dinucleotide (NaAD). The polypeptide is Probable nicotinate-nucleotide adenylyltransferase (Dictyoglomus turgidum (strain DSM 6724 / Z-1310)).